We begin with the raw amino-acid sequence, 459 residues long: Glycosyl hydrolase family 109 protein (459 aa).

Residues 1–31 (MHNIHRRHFLKAAGAVTAGLITANITASTHA) constitute a signal peptide (tat-type signal). Residues 64 to 65 (ER), D86, 135 to 138 (WEWH), 155 to 156 (EV), and N184 contribute to the NAD(+) site. Substrate is bound by residues Y213, R232, 244-247 (YPTH), and Y326. Position 244 (Y244) interacts with NAD(+).

Belongs to the Gfo/Idh/MocA family. Glycosyl hydrolase 109 subfamily. NAD(+) is required as a cofactor. Predicted to be exported by the Tat system. The position of the signal peptide cleavage has not been experimentally proven.

Its function is as follows. Glycosidase. The chain is Glycosyl hydrolase family 109 protein from Shewanella putrefaciens (strain CN-32 / ATCC BAA-453).